The primary structure comprises 160 residues: Transcription elongation factor GreA (160 aa).

Residues 3–84 (NIVDDKILLT…SKAKIIKADL (82 aa)) are a coiled coil.

Belongs to the GreA/GreB family.

Its function is as follows. Necessary for efficient RNA polymerase transcription elongation past template-encoded arresting sites. The arresting sites in DNA have the property of trapping a certain fraction of elongating RNA polymerases that pass through, resulting in locked ternary complexes. Cleavage of the nascent transcript by cleavage factors such as GreA or GreB allows the resumption of elongation from the new 3'terminus. GreA releases sequences of 2 to 3 nucleotides. In Mesomycoplasma hyopneumoniae (strain J / ATCC 25934 / NCTC 10110) (Mycoplasma hyopneumoniae), this protein is Transcription elongation factor GreA.